We begin with the raw amino-acid sequence, 293 residues long: EID1-like F-box protein 1 (293 aa).

The F-box domain occupies 16 to 68 (QCTKGHLNEDVLLLVFQHLNWNPKLVATLSCVCRWFDDFAKRVLWKEFCKTRA). A disordered region spans residues 245–293 (AIPSEDNNHTEKKQDNGFPRENVLKRRNSLLGGSENGPPPQKRLTNPNQ). Residues 250 to 259 (DNNHTEKKQD) show a composition bias toward basic and acidic residues.

The sequence is that of EID1-like F-box protein 1 (EDL1) from Arabidopsis thaliana (Mouse-ear cress).